Reading from the N-terminus, the 160-residue chain is Ubiquitin-conjugating enzyme E2 16 (160 aa).

A UBC core domain is found at serine 3–lysine 153. Cysteine 90 (glycyl thioester intermediate) is an active-site residue.

The protein belongs to the ubiquitin-conjugating enzyme family.

It carries out the reaction S-ubiquitinyl-[E1 ubiquitin-activating enzyme]-L-cysteine + [E2 ubiquitin-conjugating enzyme]-L-cysteine = [E1 ubiquitin-activating enzyme]-L-cysteine + S-ubiquitinyl-[E2 ubiquitin-conjugating enzyme]-L-cysteine.. It participates in protein modification; protein ubiquitination. In terms of biological role, catalyzes the covalent attachment of ubiquitin to other proteins. This is Ubiquitin-conjugating enzyme E2 16 (ubc16) from Schizosaccharomyces pombe (strain 972 / ATCC 24843) (Fission yeast).